The chain runs to 801 residues: Ent-copalyl diphosphate synthase, chloroplastic (801 aa).

Lys241 lines the substrate pocket. The Mg(2+) site is built by Asp373 and Asp375. Residues 373–376 carry the DXDD motif motif; it reads DIDD. Residue Lys459 coordinates substrate.

It belongs to the terpene synthase family. Requires Mg(2+) as cofactor.

It is found in the plastid. Its subcellular location is the chloroplast. It catalyses the reaction (2E,6E,10E)-geranylgeranyl diphosphate = ent-copalyl diphosphate. The protein operates within plant hormone biosynthesis; gibberellin biosynthesis. Functionally, catalyzes the conversion of geranylgeranyl diphosphate to the gibberellin precursor ent-copalyl diphosphate. This is Ent-copalyl diphosphate synthase, chloroplastic from Pisum sativum (Garden pea).